The sequence spans 155 residues: Small ribosomal subunit protein uS7 (155 aa).

The protein belongs to the universal ribosomal protein uS7 family. In terms of assembly, part of the 30S ribosomal subunit. Contacts proteins S9 and S11.

Functionally, one of the primary rRNA binding proteins, it binds directly to 16S rRNA where it nucleates assembly of the head domain of the 30S subunit. Is located at the subunit interface close to the decoding center, probably blocks exit of the E-site tRNA. The protein is Small ribosomal subunit protein uS7 of Corynebacterium glutamicum (strain R).